A 131-amino-acid polypeptide reads, in one-letter code: Small ribosomal subunit protein uS11 (131 aa).

Belongs to the universal ribosomal protein uS11 family. In terms of assembly, part of the 30S ribosomal subunit. Interacts with proteins S7 and S18. Binds to IF-3. Interacts with VmlR. Interacts with BrxC.

Located on the platform of the 30S subunit, it bridges several disparate RNA helices of the 16S rRNA. Forms part of the Shine-Dalgarno cleft in the 70S ribosome. This Bacillus subtilis (strain 168) protein is Small ribosomal subunit protein uS11.